The primary structure comprises 377 residues: 2-iminoacetate synthase (377 aa).

Positions 71–301 (NTVSFYVPLY…PEIELSLSTR (231 aa)) constitute a Radical SAM core domain. Positions 85, 89, and 92 each coordinate [4Fe-4S] cluster.

The protein belongs to the radical SAM superfamily. ThiH family. In terms of assembly, forms a heterodimer with ThiG. [4Fe-4S] cluster is required as a cofactor.

It carries out the reaction L-tyrosine + S-adenosyl-L-methionine + NADPH = 2-iminoacetate + 4-methylphenol + 5'-deoxyadenosine + L-methionine + NADP(+). The protein operates within cofactor biosynthesis; thiamine diphosphate biosynthesis. Catalyzes the radical-mediated cleavage of tyrosine to 2-iminoacetate and 4-cresol. In Escherichia coli (strain K12), this protein is 2-iminoacetate synthase (thiH).